Here is a 36-residue protein sequence, read N- to C-terminus: Dermonecrotic toxin LgSicTox-beta-LOXN1/LOXN7 (36 aa).

This sequence belongs to the arthropod phospholipase D family. Class II subfamily. Requires Mg(2+) as cofactor. Post-translationally, contains 2 disulfide bonds. Expressed by the venom gland.

The protein resides in the secreted. The enzyme catalyses an N-(acyl)-sphingosylphosphocholine = an N-(acyl)-sphingosyl-1,3-cyclic phosphate + choline. It catalyses the reaction an N-(acyl)-sphingosylphosphoethanolamine = an N-(acyl)-sphingosyl-1,3-cyclic phosphate + ethanolamine. It carries out the reaction a 1-acyl-sn-glycero-3-phosphocholine = a 1-acyl-sn-glycero-2,3-cyclic phosphate + choline. The catalysed reaction is a 1-acyl-sn-glycero-3-phosphoethanolamine = a 1-acyl-sn-glycero-2,3-cyclic phosphate + ethanolamine. Functionally, dermonecrotic toxins cleave the phosphodiester linkage between the phosphate and headgroup of certain phospholipids (sphingolipid and lysolipid substrates), forming an alcohol (often choline) and a cyclic phosphate. This toxin acts on sphingomyelin (SM). It may also act on ceramide phosphoethanolamine (CPE), lysophosphatidylcholine (LPC) and lysophosphatidylethanolamine (LPE), but not on lysophosphatidylserine (LPS), and lysophosphatidylglycerol (LPG). It acts by transphosphatidylation, releasing exclusively cyclic phosphate products as second products. Induces dermonecrosis, hemolysis, increased vascular permeability, edema, inflammatory response, and platelet aggregation. This Loxosceles gaucho (Spider) protein is Dermonecrotic toxin LgSicTox-beta-LOXN1/LOXN7.